The sequence spans 503 residues: Potassium voltage-gated channel subfamily V member 1 (503 aa).

The Cytoplasmic segment spans residues 1-213 (MELLPPRGRA…EKPGSCTAAR (213 aa)). The chain crosses the membrane as a helical span at residues 214-234 (IFGVISIIFVAVSIVNMALMS). The Extracellular segment spans residues 235 to 246 (AELSWLDPQLLE). The chain crosses the membrane as a helical span at residues 247–267 (ILEYVCISWFTGEFVLRFLCV). The Cytoplasmic segment spans residues 268–279 (RDRCRFLRKVPN). The helical transmembrane segment at 280–300 (IIDLLAILPFYITLLVESLSG) threads the bilayer. Topologically, residues 301-312 (SQTTQELENVGR) are extracellular. The chain crosses the membrane as a helical; Voltage-sensor span at residues 313–334 (IVQVLRLLRALRMLKLGRHSTG). Over 335 to 348 (LRSLGMTITQCYEE) the chain is Cytoplasmic. Residues 349 to 369 (VGLLLLFLSVGISIFSTVEYF) form a helical membrane-spanning segment. The Selectivity filter motif lies at 395 to 400 (TVGYGD). A helical transmembrane segment spans residues 410-430 (IVAFMCILSGILVLALPIAII). Residues 431 to 503 (NDRFSACYFT…RSSGGDDFWF (73 aa)) lie on the Cytoplasmic side of the membrane.

The protein belongs to the potassium channel family. V (TC 1.A.1.2) subfamily. Kv8.1/KCNV1 sub-subfamily. In terms of assembly, heteromultimer with KCNB1 and KCNB2. Interacts with KCNC4 and KCND1.

Its subcellular location is the cell membrane. Functionally, potassium channel subunit that does not form functional channels by itself. Modulates KCNB1 and KCNB2 channel activity by shifting the threshold for inactivation to more negative values and by slowing the rate of inactivation. Can down-regulate the channel activity of KCNB1, KCNB2, KCNC4 and KCND1, possibly by trapping them in intracellular membranes. The chain is Potassium voltage-gated channel subfamily V member 1 (KCNV1) from Bos taurus (Bovine).